The chain runs to 250 residues: Pyrroloquinoline-quinone synthase (250 aa).

Belongs to the PqqC family.

The enzyme catalyses 6-(2-amino-2-carboxyethyl)-7,8-dioxo-1,2,3,4,7,8-hexahydroquinoline-2,4-dicarboxylate + 3 O2 = pyrroloquinoline quinone + 2 H2O2 + 2 H2O + H(+). It participates in cofactor biosynthesis; pyrroloquinoline quinone biosynthesis. Functionally, ring cyclization and eight-electron oxidation of 3a-(2-amino-2-carboxyethyl)-4,5-dioxo-4,5,6,7,8,9-hexahydroquinoline-7,9-dicarboxylic-acid to PQQ. The sequence is that of Pyrroloquinoline-quinone synthase from Xanthomonas campestris pv. campestris (strain B100).